A 505-amino-acid chain; its full sequence is ATP synthase subunit alpha (505 aa).

170–177 (GDRQTGKS) is a binding site for ATP.

Belongs to the ATPase alpha/beta chains family. In terms of assembly, F-type ATPases have 2 components, CF(1) - the catalytic core - and CF(0) - the membrane proton channel. CF(1) has five subunits: alpha(3), beta(3), gamma(1), delta(1), epsilon(1). CF(0) has four main subunits: a(1), b(1), b'(1) and c(9-12).

Its subcellular location is the cellular thylakoid membrane. It carries out the reaction ATP + H2O + 4 H(+)(in) = ADP + phosphate + 5 H(+)(out). In terms of biological role, produces ATP from ADP in the presence of a proton gradient across the membrane. The alpha chain is a regulatory subunit. The sequence is that of ATP synthase subunit alpha from Prochlorococcus marinus (strain MIT 9215).